Consider the following 466-residue polypeptide: Soluble pyridine nucleotide transhydrogenase (466 aa).

An FAD-binding site is contributed by 36 to 45 (EKESSVGGGC).

The protein belongs to the class-I pyridine nucleotide-disulfide oxidoreductase family. Requires FAD as cofactor.

It localises to the cytoplasm. It catalyses the reaction NAD(+) + NADPH = NADH + NADP(+). Its function is as follows. Conversion of NADPH, generated by peripheral catabolic pathways, to NADH, which can enter the respiratory chain for energy generation. The polypeptide is Soluble pyridine nucleotide transhydrogenase (Vibrio atlanticus (strain LGP32) (Vibrio splendidus (strain Mel32))).